We begin with the raw amino-acid sequence, 353 residues long: Phosphate acyltransferase (353 aa).

The protein belongs to the PlsX family. Homodimer. Probably interacts with PlsY.

The protein resides in the cytoplasm. It catalyses the reaction a fatty acyl-[ACP] + phosphate = an acyl phosphate + holo-[ACP]. The protein operates within lipid metabolism; phospholipid metabolism. Functionally, catalyzes the reversible formation of acyl-phosphate (acyl-PO(4)) from acyl-[acyl-carrier-protein] (acyl-ACP). This enzyme utilizes acyl-ACP as fatty acyl donor, but not acyl-CoA. This is Phosphate acyltransferase from Nitrosospira multiformis (strain ATCC 25196 / NCIMB 11849 / C 71).